The chain runs to 313 residues: Probable cell division protein WhiA (313 aa).

A DNA-binding region (H-T-H motif) is located at residues 276 to 309 (SLKELGEMLHPKLGKSGVNHRLRKLDEIAERIRK).

The protein belongs to the WhiA family.

Functionally, involved in cell division and chromosome segregation. This chain is Probable cell division protein WhiA, found in Ruminiclostridium cellulolyticum (strain ATCC 35319 / DSM 5812 / JCM 6584 / H10) (Clostridium cellulolyticum).